The primary structure comprises 497 residues: NAD(P)H-quinone oxidoreductase chain 4, chloroplastic (497 aa).

Helical transmembrane passes span 4–24 (LPWL…IPLF), 35–55 (YTLG…CCHF), 87–107 (MGLI…AWPV), 113–133 (LFHF…ASQD), 134–154 (ILLF…LLSI), 167–187 (FILY…TIGL), 207–227 (IALE…KLPI), 242–262 (HYST…YGLI), 274–294 (AIFA…ASLI), 313–333 (MGFV…GAIL), 386–406 (LALP…GIVI), 416–436 (IVIT…LLSM), and 462–482 (IFIS…PNLV).

The protein belongs to the complex I subunit 4 family.

It localises to the plastid. It is found in the chloroplast thylakoid membrane. It carries out the reaction a plastoquinone + NADH + (n+1) H(+)(in) = a plastoquinol + NAD(+) + n H(+)(out). The catalysed reaction is a plastoquinone + NADPH + (n+1) H(+)(in) = a plastoquinol + NADP(+) + n H(+)(out). This chain is NAD(P)H-quinone oxidoreductase chain 4, chloroplastic, found in Angiopteris evecta (Mule's foot fern).